The sequence spans 236 residues: Probable transcriptional regulatory protein Suden_1389 (236 aa).

The protein belongs to the TACO1 family.

Its subcellular location is the cytoplasm. This chain is Probable transcriptional regulatory protein Suden_1389, found in Sulfurimonas denitrificans (strain ATCC 33889 / DSM 1251) (Thiomicrospira denitrificans (strain ATCC 33889 / DSM 1251)).